Here is a 117-residue protein sequence, read N- to C-terminus: Large ribosomal subunit protein uL22 (117 aa).

The protein belongs to the universal ribosomal protein uL22 family. Part of the 50S ribosomal subunit.

This protein binds specifically to 23S rRNA; its binding is stimulated by other ribosomal proteins, e.g. L4, L17, and L20. It is important during the early stages of 50S assembly. It makes multiple contacts with different domains of the 23S rRNA in the assembled 50S subunit and ribosome. In terms of biological role, the globular domain of the protein is located near the polypeptide exit tunnel on the outside of the subunit, while an extended beta-hairpin is found that lines the wall of the exit tunnel in the center of the 70S ribosome. In Staphylococcus aureus (strain USA300), this protein is Large ribosomal subunit protein uL22.